The sequence spans 393 residues: uncharacterized protein (393 aa).

Positions 9, 15, 18, and 97 each coordinate [4Fe-4S] cluster. S-adenosyl-L-methionine-binding residues include Gln-231, Tyr-258, Glu-279, and Asp-325. The Nucleophile role is filled by Cys-352.

It belongs to the class I-like SAM-binding methyltransferase superfamily. RNA M5U methyltransferase family.

This is an uncharacterized protein from Leptospira interrogans serogroup Icterohaemorrhagiae serovar Lai (strain 56601).